Here is a 472-residue protein sequence, read N- to C-terminus: Na(+)/H(+) antiporter NhaA 1 (472 aa).

Helical transmembrane passes span 34-54 (TASI…NSQW), 86-106 (GLMV…CLVG), 116-136 (LVIA…AGVA), 146-166 (GWGI…ALLG), 175-195 (VTLS…IGLF), 203-223 (TSLM…VLGF), 227-247 (IFYL…GVHA), 324-344 (PVSL…ALPD), 353-373 (VVFI…ISVF), 394-414 (VFAL…IASL), and 428-448 (LGIL…FLMI).

The protein belongs to the NhaA Na(+)/H(+) (TC 2.A.33) antiporter family.

The protein localises to the cell inner membrane. The catalysed reaction is Na(+)(in) + 2 H(+)(out) = Na(+)(out) + 2 H(+)(in). Functionally, na(+)/H(+) antiporter that extrudes sodium in exchange for external protons. The sequence is that of Na(+)/H(+) antiporter NhaA 1 from Pseudoalteromonas atlantica (strain T6c / ATCC BAA-1087).